The sequence spans 776 residues: MIKLDMTILDSLKENKALRKLLFSGHFGLEKENIRVTSDGKLALTPHPAIFGPKEDNPYIKTDFSESQIEMITPVTDSIDDVYNWLENLHNIVSLRSKNELLWPSSNPPILPAEKDIPIAEYKTPDSPDRKYREHLAQGYGKKIQLLSGIHYNFSFPEALIDGLYDEISLPNESKRDFKNRLYLKVAKYFMKNRWLLIYLTGASPVYLADFTKTKQEEKLRDGSSALHDGISLRNSNAGYKNKESLYVDYNSFDAYISSISNYIEAGKIESMREFYNPIRLKNAHTDQTVESLAKHGVEYLEIRSIDLNPLEPNGISKEALHFIHLFLIKGLLSEDRELCENNQQLADENENNIALNGLSKPAIKNCDNEEMALADAGLLELDKMNDFIQSLRPEDTYFQAIIEKQKERLLHPEKTIAAQVKEQSATAGFIEFHLNQAKTYMEETEALAYKLIGAEDMELSTQIIWKDAIARGIKVDVLDRAENFLRFQKGDHVEYVKQASKTSKDNYVSVLMMENKVVTKLVLAENNIRVPFGDSFSDQALALEAFSLFKDKQIVVKPKSTNYGWGISIFKNKFTTEDYQEALNIAFSYDSSVIIEEFIPGDEFRFLVINDKVEAVLKRVPANVTGDGIHTVRELVEEKNMDPLRGTDHLKPLEKIRTGPEETLMLSMQKLSWDSIPKANETIYLRENSNVSTGGDSIDYTAEMDDYFKEIAIRATQVLDAKICGVDIIVPRETIDRDKHAIIELNFNPAMHMHCFPYQGEQKKIGDKILDFLFE.

Positions 1 to 354 are glutamate--cysteine ligase; sequence MIKLDMTILD…QLADENENNI (354 aa). In terms of domain architecture, ATP-grasp spans 521 to 775; it reads KLVLAENNIR…IGDKILDFLF (255 aa). Residue 548–606 coordinates ATP; it reads SLFKDKQIVVKPKSTNYGWGISIFKNKFTTEDYQEALNIAFSYDSSVIIEEFIPGDEFR. Mg(2+) contacts are provided by Asp-728, Glu-745, and Asn-747. Mn(2+) contacts are provided by Asp-728, Glu-745, and Asn-747.

This sequence in the N-terminal section; belongs to the glutamate--cysteine ligase type 1 family. Type 2 subfamily. As to quaternary structure, monomer. The cofactor is Mg(2+). Requires Mn(2+) as cofactor.

The catalysed reaction is L-cysteine + L-glutamate + ATP = gamma-L-glutamyl-L-cysteine + ADP + phosphate + H(+). It catalyses the reaction gamma-L-glutamyl-L-cysteine + glycine + ATP = glutathione + ADP + phosphate + H(+). It functions in the pathway sulfur metabolism; glutathione biosynthesis; glutathione from L-cysteine and L-glutamate: step 1/2. The protein operates within sulfur metabolism; glutathione biosynthesis; glutathione from L-cysteine and L-glutamate: step 2/2. In terms of biological role, synthesizes glutathione from L-glutamate and L-cysteine via gamma-L-glutamyl-L-cysteine. In Listeria welshimeri serovar 6b (strain ATCC 35897 / DSM 20650 / CCUG 15529 / CIP 8149 / NCTC 11857 / SLCC 5334 / V8), this protein is Glutathione biosynthesis bifunctional protein GshAB.